A 572-amino-acid polypeptide reads, in one-letter code: uncharacterized protein (572 aa).

The interval alanine 543–asparagine 572 is disordered. Positions serine 547–threonine 563 are enriched in low complexity.

This is an uncharacterized protein from Acanthamoeba polyphaga (Amoeba).